The primary structure comprises 132 residues: Small ribosomal subunit protein uS8 (132 aa).

The protein belongs to the universal ribosomal protein uS8 family. As to quaternary structure, part of the 30S ribosomal subunit. Contacts proteins S5 and S12.

Functionally, one of the primary rRNA binding proteins, it binds directly to 16S rRNA central domain where it helps coordinate assembly of the platform of the 30S subunit. In Bifidobacterium animalis subsp. lactis (strain AD011), this protein is Small ribosomal subunit protein uS8.